A 90-amino-acid polypeptide reads, in one-letter code: Small ribosomal subunit protein bS16 (90 aa).

This sequence belongs to the bacterial ribosomal protein bS16 family.

In Lactobacillus helveticus (strain DPC 4571), this protein is Small ribosomal subunit protein bS16.